The chain runs to 152 residues: 3-dehydroquinate dehydratase (152 aa).

Tyrosine 26 acts as the Proton acceptor in catalysis. The substrate site is built by asparagine 78, histidine 84, and aspartate 91. Histidine 104 (proton donor) is an active-site residue. Residues 105–106 and arginine 115 each bind substrate; that span reads LS.

It belongs to the type-II 3-dehydroquinase family. As to quaternary structure, homododecamer.

It catalyses the reaction 3-dehydroquinate = 3-dehydroshikimate + H2O. Its pathway is metabolic intermediate biosynthesis; chorismate biosynthesis; chorismate from D-erythrose 4-phosphate and phosphoenolpyruvate: step 3/7. In terms of biological role, catalyzes a trans-dehydration via an enolate intermediate. This chain is 3-dehydroquinate dehydratase, found in Idiomarina loihiensis (strain ATCC BAA-735 / DSM 15497 / L2-TR).